A 268-amino-acid polypeptide reads, in one-letter code: Putative ABC transporter ATP-binding protein LMOf2365_1216 (268 aa).

The ABC transporter domain maps to Leu-2–Val-237. An ATP-binding site is contributed by Gly-35–Ser-42.

Belongs to the ABC transporter superfamily.

Its subcellular location is the cell membrane. Its function is as follows. Probably part of an ABC transporter complex. Responsible for energy coupling to the transport system. This is Putative ABC transporter ATP-binding protein LMOf2365_1216 from Listeria monocytogenes serotype 4b (strain F2365).